A 331-amino-acid polypeptide reads, in one-letter code: Mitochondrial respiration co-chaperone MRJ1 (331 aa).

The N-terminal 36 residues, 1 to 36, are a transit peptide targeting the mitochondrion; it reads MLSFQATVRPLAVSSRLHSPAAHIWRRNAHTAAMSD. Residues 35–66 form a disordered region; sequence SDDSLDQGSSSSYGDSASQPHLGKGKGRQDSL. The span at 40 to 53 shows a compositional bias: low complexity; it reads DQGSSSSYGDSASQ. The J domain maps to 83-147; that stretch reads DPFEVMALDR…SSRSAFLKTG (65 aa). Positions 203–226 are disordered; sequence DGSQGWRPYEDPSKGFSPPTSGPA. The IQ domain occupies 275-303; the sequence is RALAQARYEAATHGHIRREQIRRRVREAE.

Belongs to the DnaJ family. Interacts with QCR2.

It localises to the mitochondrion. Its function is as follows. Mitochondrial co-chaperone required for ubiquinol-cytochrome c oxidoreductase (mitochondrial respiratory chain complex III) activity. This chain is Mitochondrial respiration co-chaperone MRJ1, found in Cryptococcus neoformans var. grubii serotype A (strain H99 / ATCC 208821 / CBS 10515 / FGSC 9487) (Filobasidiella neoformans var. grubii).